Reading from the N-terminus, the 342-residue chain is MTETSLSSQCFPMSVLNNTIAEPLIFLLMGIPGLKATQYWISIPFCLLYVVAVSGNSMILFVVLCERSLHKPMYYFLSMLSATDLSLSLCTLSTTLGVFWFEAREINLNACIAQMFFLHGFTFMESGVLLAMAFDRFVAICYPLRYTTILTNARIAKIGMSMLIRNVAVMLPVMLFVKRLSFCSSMVLSHSYCYHVDLIQLSCTDNRINSILGLFALLSTTGFDCPCILLSYILIIRSVLSIASSEERRKAFNTCTSHISAVSIFYLPLISLSLVHRYGHSAPPFVHIIMANVFLLIPPVLNPIIYSVKIKQIQKAIIKVLIQKHSKSNHQLFLIRDKAIYE.

At 1–39 (MTETSLSSQCFPMSVLNNTIAEPLIFLLMGIPGLKATQY) the chain is on the extracellular side. Asn-17 carries an N-linked (GlcNAc...) asparagine glycan. The chain crosses the membrane as a helical span at residues 40–60 (WISIPFCLLYVVAVSGNSMIL). Residues 61–68 (FVVLCERS) lie on the Cytoplasmic side of the membrane. A helical membrane pass occupies residues 69–89 (LHKPMYYFLSMLSATDLSLSL). At 90–113 (CTLSTTLGVFWFEAREINLNACIA) the chain is on the extracellular side. Cys-111 and Cys-203 form a disulfide bridge. Residues 114–134 (QMFFLHGFTFMESGVLLAMAF) traverse the membrane as a helical segment. Topologically, residues 135–153 (DRFVAICYPLRYTTILTNA) are cytoplasmic. The chain crosses the membrane as a helical span at residues 154–174 (RIAKIGMSMLIRNVAVMLPVM). Over 175-210 (LFVKRLSFCSSMVLSHSYCYHVDLIQLSCTDNRINS) the chain is Extracellular. The helical transmembrane segment at 211-231 (ILGLFALLSTTGFDCPCILLS) threads the bilayer. Residues 232–251 (YILIIRSVLSIASSEERRKA) lie on the Cytoplasmic side of the membrane. Residues 252 to 272 (FNTCTSHISAVSIFYLPLISL) form a helical membrane-spanning segment. Residues 273–287 (SLVHRYGHSAPPFVH) lie on the Extracellular side of the membrane. A helical membrane pass occupies residues 288-308 (IIMANVFLLIPPVLNPIIYSV). Over 309 to 342 (KIKQIQKAIIKVLIQKHSKSNHQLFLIRDKAIYE) the chain is Cytoplasmic.

The protein belongs to the G-protein coupled receptor 1 family.

The protein resides in the cell membrane. Its function is as follows. Odorant receptor. The sequence is that of Olfactory receptor 51F2 (OR51F2) from Homo sapiens (Human).